Reading from the N-terminus, the 96-residue chain is Class I hydrophobin 2 (96 aa).

A signal peptide spans Met1 to Ala15. Cystine bridges form between Cys28-Cys77, Cys34-Cys71, Cys35-Cys55, and Cys78-Cys91.

This sequence belongs to the fungal hydrophobin family.

The protein resides in the secreted. The protein localises to the cell wall. Its function is as follows. Aerial growth, conidiation, and dispersal of filamentous fungi in the environment rely upon a capability of their secreting small amphipathic proteins called hydrophobins (HPBs) with low sequence identity. Class I can self-assemble into an outermost layer of rodlet bundles on aerial cell surfaces, conferring cellular hydrophobicity that supports fungal growth, development and dispersal; whereas Class II form highly ordered films at water-air interfaces through intermolecular interactions but contribute nothing to the rodlet structure. Hyd2 plays a neglectable role in hyphal growth and asexual development and does not seem involved in cellular hydrophobicity, conidial adhesion, stress tolerance nor insect pathogenicity. The protein is Class I hydrophobin 2 of Metarhizium robertsii (strain ARSEF 23 / ATCC MYA-3075) (Metarhizium anisopliae (strain ARSEF 23)).